Here is a 461-residue protein sequence, read N- to C-terminus: Asparagine--tRNA ligase (461 aa).

It belongs to the class-II aminoacyl-tRNA synthetase family. Homodimer.

It is found in the cytoplasm. It catalyses the reaction tRNA(Asn) + L-asparagine + ATP = L-asparaginyl-tRNA(Asn) + AMP + diphosphate + H(+). This is Asparagine--tRNA ligase from Geotalea uraniireducens (strain Rf4) (Geobacter uraniireducens).